The sequence spans 296 residues: Fructose-bisphosphate aldolase class 1 (296 aa).

The active-site Proton acceptor is the Glu-175. Lys-212 (schiff-base intermediate with dihydroxyacetone-P) is an active-site residue.

This sequence belongs to the class I fructose-bisphosphate aldolase family.

The enzyme catalyses beta-D-fructose 1,6-bisphosphate = D-glyceraldehyde 3-phosphate + dihydroxyacetone phosphate. Its pathway is carbohydrate degradation; glycolysis; D-glyceraldehyde 3-phosphate and glycerone phosphate from D-glucose: step 4/4. The sequence is that of Fructose-bisphosphate aldolase class 1 from Staphylococcus aureus (strain bovine RF122 / ET3-1).